The chain runs to 91 residues: UPF0298 protein spyM18_0447 (91 aa).

Belongs to the UPF0298 family.

The protein localises to the cytoplasm. This Streptococcus pyogenes serotype M18 (strain MGAS8232) protein is UPF0298 protein spyM18_0447.